The chain runs to 186 residues: UPF0301 protein Nmul_A2478 (186 aa).

The protein belongs to the UPF0301 (AlgH) family.

The chain is UPF0301 protein Nmul_A2478 from Nitrosospira multiformis (strain ATCC 25196 / NCIMB 11849 / C 71).